We begin with the raw amino-acid sequence, 344 residues long: Phenylalanine--tRNA ligase alpha subunit (344 aa).

Glu-256 lines the Mg(2+) pocket.

The protein belongs to the class-II aminoacyl-tRNA synthetase family. Phe-tRNA synthetase alpha subunit type 1 subfamily. As to quaternary structure, tetramer of two alpha and two beta subunits. Requires Mg(2+) as cofactor.

It is found in the cytoplasm. It carries out the reaction tRNA(Phe) + L-phenylalanine + ATP = L-phenylalanyl-tRNA(Phe) + AMP + diphosphate + H(+). The chain is Phenylalanine--tRNA ligase alpha subunit from Bacillus cereus (strain G9842).